A 643-amino-acid chain; its full sequence is Probable potassium transport system protein Kup (643 aa).

Basic and acidic residues predominate over residues 1 to 12 (MSISSKTEDSDI). A disordered region spans residues 1–20 (MSISSKTEDSDIRSSVMTDH). Helical transmembrane passes span 28-48 (LAGLSLAALGVVFGDIGTSPL), 65-85 (AGNVLGVLSLLFWALVLIVGL), 121-141 (WLLVAIGLFGASLLYGDGMIT), 158-178 (PAFHEMVIPLTMLVLAGLFLF), 187-207 (GALFGPIILLWFIAIAILGII), 224-244 (GISFLLGNNLKGFTVLGAVFL), 268-288 (WFLLVLPALLLNYFGQGALLL), 301-321 (LVPSWAMIPMVLLATSATIIA), 358-378 (IYVPAANWSLMVGTIGIVAWF), 384-404 (LAAAYGVAVTATMLISTILFY), 415-435 (PAALNVMITFFAAIDLSFFGA), and 440-460 (LFHGAWVPLAVALVMFTIMNT).

Belongs to the HAK/KUP transporter (TC 2.A.72) family.

It localises to the cell inner membrane. It catalyses the reaction K(+)(in) + H(+)(in) = K(+)(out) + H(+)(out). Functionally, transport of potassium into the cell. Likely operates as a K(+):H(+) symporter. The protein is Probable potassium transport system protein Kup of Chlorobium luteolum (strain DSM 273 / BCRC 81028 / 2530) (Pelodictyon luteolum).